We begin with the raw amino-acid sequence, 49 residues long: Large ribosomal subunit protein bL33 (49 aa).

It belongs to the bacterial ribosomal protein bL33 family.

In Lacticaseibacillus casei (strain BL23) (Lactobacillus casei), this protein is Large ribosomal subunit protein bL33.